A 418-amino-acid chain; its full sequence is MAKRQLGLGKAAKAKKQKTETSQSTAATSQKPNETLRVELNEEADADDELAQLQALWNTYSKSDKENELMVNGIIHECDRLLRNWDEKNEALPDYFHAIYALALSELAKYKPEETSQCFQMALERLDAGLAAYPKSIDVNFAKSRVLLARIPLQYISTLEVSSQVGDYPNVSEMLDEALSVYEVAETEAEARKEYSKFNEDNLDILQALDDVLDMMDNFCKKEEEEDEEKEDDDDEEEDEEEEVIQLAENHPLYHIQATDKYNFWWRNHTLKFLTNVTKRTENTTQLQRELCTRLGQSYLQEAEVPANVYTTLKYDDDYAGLGELQGLQMEEGQKLAQESFKEALKYLKKAQDDDDPDTWVNVAEAMISLGNMYEMDSPDQEKWYDEAEKILVRANKATQGKYREILENLRGEDEGDE.

Composition is skewed to low complexity over residues 1–11 (MAKRQLGLGKA) and 21–30 (TSQSTAATSQ). Disordered stretches follow at residues 1–36 (MAKRQLGLGKAAKAKKQKTETSQSTAATSQKPNETL) and 222–241 (KEEEEDEEKEDDDDEEEDEE). Over residues 224 to 241 (EEEDEEKEDDDDEEEDEE) the composition is skewed to acidic residues.

It belongs to the ETT1 family.

It localises to the nucleus. Its function is as follows. Required for correct translation termination and probably involved in regulation of hypoxic gene expression. The polypeptide is Enhancer of translation termination 1 (ETT1) (Meyerozyma guilliermondii (strain ATCC 6260 / CBS 566 / DSM 6381 / JCM 1539 / NBRC 10279 / NRRL Y-324) (Yeast)).